We begin with the raw amino-acid sequence, 1752 residues long: Chitin synthase E (1752 aa).

1–8 contacts ATP; it reads GESGSGKT. Positions 492 to 520 are disordered; that stretch reads SSKPLRMPSMARRKTSPSSRLAFDAGDAD. Positions 558–582 are actin-binding; that stretch reads LDIVNKCLSSTNLNPYFIFCLKPND. Transmembrane regions (helical) follow at residues 789 to 809 and 828 to 848; these read WIAL…KLFG and LIIW…PGLV. In terms of domain architecture, Cytochrome b5 heme-binding spans 852-940; that stretch reads QHVYSAAELS…LLDYRPTNIS (89 aa). Residues Asn-938 and Asn-963 are each glycosylated (N-linked (GlcNAc...) asparagine). Residues 1099 to 1119 form a helical membrane-spanning segment; it reads FILAISVLICSIIVFKFLAAL. Asn-1322, Asn-1356, and Asn-1462 each carry an N-linked (GlcNAc...) asparagine glycan. A run of 3 helical transmembrane segments spans residues 1494–1514, 1520–1540, and 1547–1567; these read LSTV…YWLV, IPYT…LIFI, and MVGW…PCPS. A glycan (N-linked (GlcNAc...) asparagine) is linked at Asn-1685. The DEK-C domain occupies 1689–1744; it reads LPSDDAILAEIREILRTADLMSVTKKSIKLELERAFGVNLDLKRPYINSGKGYTFP.

The protein in the N-terminal section; belongs to the TRAFAC class myosin-kinesin ATPase superfamily. Myosin family. In the C-terminal section; belongs to the chitin synthase family. Class V subfamily.

The protein localises to the cell membrane. Its subcellular location is the cell septum. It localises to the cell tip. It carries out the reaction [(1-&gt;4)-N-acetyl-beta-D-glucosaminyl](n) + UDP-N-acetyl-alpha-D-glucosamine = [(1-&gt;4)-N-acetyl-beta-D-glucosaminyl](n+1) + UDP + H(+). In terms of biological role, polymerizes chitin, a structural polymer of the cell wall and septum, by transferring the sugar moiety of UDP-GlcNAc to the non-reducing end of the growing chitin polymer. Important for hyphal growth and conidiophore development but not pathogenicity. In Aspergillus fumigatus (Neosartorya fumigata), this protein is Chitin synthase E.